The primary structure comprises 467 residues: Transcription factor TGAL7 (467 aa).

The span at 1–10 (MGGSREEDRQ) shows a compositional bias: basic and acidic residues. Disordered stretches follow at residues 1–42 (MGGS…KESS) and 105–184 (QLQV…KTLR). The span at 25-41 (SSSPTTMIASSSMSKES) shows a compositional bias: low complexity. Polar residues predominate over residues 120–129 (QGGQKINSSV). A compositionally biased stretch (basic and acidic residues) spans 145–157 (KDNKNSSLIKKEG). A compositionally biased stretch (polar residues) spans 158 to 168 (SSSGKGATTSN). The segment covering 169 to 182 (DPEREGRRTLDPKT) has biased composition (basic and acidic residues). The 45-residue stretch at 179–223 (DPKTLRRLAQNREAARKSRLRKKAYIQQLESSRIRLSQLEQQVHV) folds into the bZIP domain. The basic motif stretch occupies residues 181 to 201 (KTLRRLAQNREAARKSRLRKK). Positions 207 to 221 (LESSRIRLSQLEQQV) are leucine-zipper. Positions 247 to 458 (ASLFDLEYGR…RALSTLWVAR (212 aa)) constitute a DOG1 domain.

This sequence belongs to the bZIP family. Interacts with NPR5/NH4, NH5.1 and NH5.2.

The protein resides in the nucleus. In terms of biological role, transcriptional regulator involved in defense response. In Oryza sativa subsp. japonica (Rice), this protein is Transcription factor TGAL7.